Reading from the N-terminus, the 539-residue chain is D-mannonate oxidoreductase (539 aa).

39–50 (WVHFGGGNIFRG) serves as a coordination point for NAD(+).

It belongs to the mannitol dehydrogenase family. UxuB subfamily.

It catalyses the reaction D-mannonate + NAD(+) = keto-D-fructuronate + NADH + H(+). The protein operates within carbohydrate metabolism. Functionally, catalyzes the reduction of D-fructuronate (D-FruA) to D-mannonate (D-ManA). This Thermotoga maritima (strain ATCC 43589 / DSM 3109 / JCM 10099 / NBRC 100826 / MSB8) protein is D-mannonate oxidoreductase.